The following is a 437-amino-acid chain: MAAGTLYTYPENWRAFKALIAAQYSGAQVRVLSAPPHFHFGQTNRTPEFLRKFPAGKVPAFEGDDGFCVFESNAIAYYVSNEELRGSTPEAAAQVVQWVSFADSDIVPPASTWVFPTLGIMHHNKQATENAKEEVRRILGLLDAHLKTRTFLVGERVTLADITVVCTLLWLYKQVLEPSFRQAFPNTNRWFLTCINQPQFRAVLGEVKLCEKMAQFDAKKFAETQPKKDTPRKEKGSREEKQKPQAERKEEKKAAAPAPEEEMDECEQALAAEPKAKDPFAHLPKSTFVLDEFKRKYSNEDTLSVALPYFWEHFDKDGWSLWYSEYRFPEELTQTFMSCNLITGMFQRLDKLRKNAFASVILFGTNNSSSISGVWVFRGQELAFPLSPDWQVDYESYTWRKLDPGSEETQTLVREYFSWEGAFQHVGKAFNQGKIFK.

Alanine 2 is subject to N-acetylalanine. One can recognise a GST N-terminal domain in the interval 2 to 87 (AAGTLYTYPE…YVSNEELRGS (86 aa)). Residues 88–216 (TPEAAAQVVQ…VKLCEKMAQF (129 aa)) form the GST C-terminal domain. 2 positions are modified to N6-acetyllysine: lysine 147 and lysine 212. A compositionally biased stretch (basic and acidic residues) spans 221–254 (FAETQPKKDTPRKEKGSREEKQKPQAERKEEKKA). The disordered stretch occupies residues 221–268 (FAETQPKKDTPRKEKGSREEKQKPQAERKEEKKAAAPAPEEEMDECEQ). Residue lysine 253 forms a Glycyl lysine isopeptide (Lys-Gly) (interchain with G-Cter in SUMO1) linkage. The region spanning 276–437 (AKDPFAHLPK…KAFNQGKIFK (162 aa)) is the EF-1-gamma C-terminal domain. A Glycyl lysine isopeptide (Lys-Gly) (interchain with G-Cter in SUMO2) cross-link involves residue lysine 285. Position 401 is an N6-acetyllysine (lysine 401). At lysine 434 the chain carries N6-acetyllysine; alternate. Lysine 434 bears the N6-malonyllysine; alternate mark.

EF-1 is composed of four subunits: alpha, beta, delta, and gamma.

Functionally, probably plays a role in anchoring the complex to other cellular components. The sequence is that of Elongation factor 1-gamma (EEF1G) from Macaca fascicularis (Crab-eating macaque).